The primary structure comprises 355 residues: UDP-3-O-acylglucosamine N-acyltransferase (355 aa).

The Proton acceptor role is filled by H258.

This sequence belongs to the transferase hexapeptide repeat family. LpxD subfamily. As to quaternary structure, homotrimer.

The enzyme catalyses a UDP-3-O-[(3R)-3-hydroxyacyl]-alpha-D-glucosamine + a (3R)-hydroxyacyl-[ACP] = a UDP-2-N,3-O-bis[(3R)-3-hydroxyacyl]-alpha-D-glucosamine + holo-[ACP] + H(+). It functions in the pathway bacterial outer membrane biogenesis; LPS lipid A biosynthesis. Its function is as follows. Catalyzes the N-acylation of UDP-3-O-acylglucosamine using 3-hydroxyacyl-ACP as the acyl donor. Is involved in the biosynthesis of lipid A, a phosphorylated glycolipid that anchors the lipopolysaccharide to the outer membrane of the cell. The sequence is that of UDP-3-O-acylglucosamine N-acyltransferase from Agrobacterium fabrum (strain C58 / ATCC 33970) (Agrobacterium tumefaciens (strain C58)).